The sequence spans 435 residues: Homogentisate 1,2-dioxygenase (435 aa).

The active-site Proton acceptor is the His-289. The Fe cation site is built by His-332 and Glu-338. Homogentisate-binding residues include Tyr-347 and His-368. His-368 is a binding site for Fe cation.

This sequence belongs to the homogentisate dioxygenase family. In terms of assembly, hexamer; dimer of trimers. Requires Fe cation as cofactor.

It catalyses the reaction homogentisate + O2 = 4-maleylacetoacetate + H(+). It functions in the pathway amino-acid degradation; L-phenylalanine degradation; acetoacetate and fumarate from L-phenylalanine: step 4/6. Functionally, involved in the catabolism of homogentisate (2,5-dihydroxyphenylacetate or 2,5-OH-PhAc), a central intermediate in the degradation of phenylalanine and tyrosine. Catalyzes the oxidative ring cleavage of the aromatic ring of homogentisate to yield maleylacetoacetate. The polypeptide is Homogentisate 1,2-dioxygenase (Pseudomonas savastanoi pv. phaseolicola (strain 1448A / Race 6) (Pseudomonas syringae pv. phaseolicola (strain 1448A / Race 6))).